The sequence spans 600 residues: Elongation factor 4 (600 aa).

The tr-type G domain maps to 5-187; that stretch reads SNIRNFSIIA…ALVERIPAPT (183 aa). GTP is bound by residues 17–22 and 134–137; these read DHGKST and NKID.

Belongs to the TRAFAC class translation factor GTPase superfamily. Classic translation factor GTPase family. LepA subfamily.

The protein resides in the cell inner membrane. It catalyses the reaction GTP + H2O = GDP + phosphate + H(+). Its function is as follows. Required for accurate and efficient protein synthesis under certain stress conditions. May act as a fidelity factor of the translation reaction, by catalyzing a one-codon backward translocation of tRNAs on improperly translocated ribosomes. Back-translocation proceeds from a post-translocation (POST) complex to a pre-translocation (PRE) complex, thus giving elongation factor G a second chance to translocate the tRNAs correctly. Binds to ribosomes in a GTP-dependent manner. The protein is Elongation factor 4 of Psychrobacter sp. (strain PRwf-1).